We begin with the raw amino-acid sequence, 139 residues long: Probable cytochrome b5 (139 aa).

One can recognise a Cytochrome b5 heme-binding domain in the interval 2–78 (SAEFTYQDVA…LEPLLVGTLK (77 aa)). Residues histidine 37 and histidine 61 each coordinate heme. The chain crosses the membrane as a helical span at residues 105–125 (GLGIGLYAVLVLGGLAGFAAY).

It belongs to the cytochrome b5 family.

Its subcellular location is the endoplasmic reticulum membrane. The protein localises to the microsome membrane. Membrane bound hemoprotein which function as an electron carrier for several membrane bound oxygenases. The chain is Probable cytochrome b5 from Neurospora crassa (strain ATCC 24698 / 74-OR23-1A / CBS 708.71 / DSM 1257 / FGSC 987).